A 426-amino-acid polypeptide reads, in one-letter code: Proline--tRNA ligase (426 aa).

Belongs to the class-II aminoacyl-tRNA synthetase family. ProS type 2 subfamily. In terms of assembly, homodimer.

It is found in the cytoplasm. It carries out the reaction tRNA(Pro) + L-proline + ATP = L-prolyl-tRNA(Pro) + AMP + diphosphate. Catalyzes the attachment of proline to tRNA(Pro) in a two-step reaction: proline is first activated by ATP to form Pro-AMP and then transferred to the acceptor end of tRNA(Pro). In Rickettsia africae (strain ESF-5), this protein is Proline--tRNA ligase.